A 281-amino-acid chain; its full sequence is sn-glycerol-3-phosphate transport system permease protein UgpE (281 aa).

Helical transmembrane passes span valine 14–alanine 34, leucine 85–phenylalanine 105, phenylalanine 113–valine 133, methionine 142–phenylalanine 162, phenylalanine 188–tyrosine 210, and tryptophan 247–leucine 267. Positions leucine 77–methionine 268 constitute an ABC transmembrane type-1 domain.

This sequence belongs to the binding-protein-dependent transport system permease family. UgpAE subfamily. As to quaternary structure, the complex is composed of two ATP-binding proteins (UgpC), two transmembrane proteins (UgpA and UgpE) and a solute-binding protein (UgpB).

Its subcellular location is the cell inner membrane. In terms of biological role, part of the ABC transporter complex UgpBAEC involved in sn-glycerol-3-phosphate (G3P) import. Probably responsible for the translocation of the substrate across the membrane. This Pectobacterium atrosepticum (strain SCRI 1043 / ATCC BAA-672) (Erwinia carotovora subsp. atroseptica) protein is sn-glycerol-3-phosphate transport system permease protein UgpE (ugpE).